We begin with the raw amino-acid sequence, 271 residues long: Aminoglycoside 3'-phosphotransferase (271 aa).

D198 functions as the Proton acceptor in the catalytic mechanism.

The protein belongs to the aminoglycoside phosphotransferase family.

It carries out the reaction kanamycin A + ATP = kanamycin 3'-phosphate + ADP + H(+). Its function is as follows. Resistance to kanamycin and structurally-related aminoglycosides, including amikacin. The protein is Aminoglycoside 3'-phosphotransferase (aphA1) of Escherichia coli.